We begin with the raw amino-acid sequence, 1050 residues long: Integrin alpha-5 (1050 aa).

An N-terminal signal peptide occupies residues 1 to 32 (MQLPRGSRVPGLVATFLFPVLCALLTFSSVRG). The Extracellular segment spans residues 33–996 (FNLAVEQPAV…IHWAKPESSY (964 aa)). 7 FG-GAP repeats span residues 34 to 99 (NLAV…GTNC), 116 to 175 (DTPQ…NFTT), 183 to 235 (RTDF…QEAY), 249 to 301 (QTRQ…GTDL), 302 to 367 (RSLY…MEST), 368 to 426 (PHLI…GVDS), and 430 to 493 (QVLQ…ISPN). 3 N-linked (GlcNAc...) asparagine glycosylation sites follow: asparagine 75, asparagine 95, and asparagine 98. Disulfide bonds link cysteine 90/cysteine 99 and cysteine 145/cysteine 166. The N-linked (GlcNAc...) asparagine glycan is linked to asparagine 172. Cysteine 182 and cysteine 195 are disulfide-bonded. Ca(2+)-binding residues include glutamate 270, serine 272, aspartate 274, threonine 276, and aspartate 278. Asparagine 287, asparagine 297, and asparagine 306 each carry an N-linked (GlcNAc...) asparagine glycan. The Ca(2+) site is built by aspartate 324, asparagine 326, aspartate 328, leucine 330, aspartate 332, aspartate 390, aspartate 392, aspartate 394, aspartate 398, aspartate 454, aspartate 456, asparagine 458, tyrosine 460, and aspartate 462. The cysteines at positions 502 and 513 are disulfide-linked. Residues asparagine 507, asparagine 515, asparagine 521, and asparagine 600 are each glycosylated (N-linked (GlcNAc...) asparagine). A disulfide bridge links cysteine 519 with cysteine 575. Cysteine 636 and cysteine 642 form a disulfide bridge. 4 N-linked (GlcNAc...) asparagine glycosylation sites follow: asparagine 649, asparagine 714, asparagine 763, and asparagine 861. A disulfide bond links cysteine 708 and cysteine 721. 3 disulfide bridges follow: cysteine 839–cysteine 958, cysteine 862–cysteine 922, and cysteine 910–cysteine 917. Residues 997-1022 (GVPLWIIILAILIGLLLLALLIYVLY) traverse the membrane as a helical segment. Topologically, residues 1023-1050 (KLGFFKRSYQYGTAMEKAELKPQAASEA) are cytoplasmic. Positions 1025–1029 (GFFKR) match the GFFKR motif motif.

Belongs to the integrin alpha chain family. Heterodimer of an alpha and a beta subunit. The alpha subunit is composed of a heavy and a light chain linked by a disulfide bond. Alpha-5 associates with beta-1.

The protein localises to the cell membrane. It localises to the cell junction. It is found in the focal adhesion. In terms of biological role, integrin alpha-5/beta-1 (ITGA5:ITGB1) is a receptor for fibronectin. It recognizes the sequence R-G-D in its ligands. ITGA5:ITGB1 acts as a receptor for fibrillin-1 (FBN1) and mediates R-G-D-dependent cell adhesion to FBN1. ITGA5:ITGB1 acts as a receptor for fibronectin (FN1) and mediates R-G-D-dependent cell adhesion to FN1. ITGA5:ITGB1 is a receptor for IL1B and binding is essential for IL1B signaling. ITGA5:ITGB3 is a receptor for soluble CD40LG and is required for CD40/CD40LG signaling. The protein is Integrin alpha-5 (itga5) of Xenopus laevis (African clawed frog).